The sequence spans 153 residues: Profilin (153 aa).

This sequence belongs to the profilin family. In terms of assembly, occurs in many kinds of cells as a complex with monomeric actin in a 1:1 ratio.

The protein resides in the cytoplasm. It localises to the cytoskeleton. Binds to actin and affects the structure of the cytoskeleton. At high concentrations, profilin prevents the polymerization of actin, whereas it enhances it at low concentrations. By binding to PIP2, it inhibits the formation of IP3 and DG. In Tetrahymena pyriformis, this protein is Profilin.